The following is a 130-amino-acid chain: Small ribosomal subunit protein uS9 (130 aa).

Belongs to the universal ribosomal protein uS9 family.

In Shewanella halifaxensis (strain HAW-EB4), this protein is Small ribosomal subunit protein uS9.